Reading from the N-terminus, the 224-residue chain is UPF0758 protein XF_0148 (224 aa).

An MPN domain is found at 102 to 224; it reads SIHDPISAGR…PVSFAEHGWL (123 aa). His173, His175, and Asp186 together coordinate Zn(2+). The JAMM motif signature appears at 173–186; it reads HNHPSGNREPSPAD.

It belongs to the UPF0758 family.

The polypeptide is UPF0758 protein XF_0148 (Xylella fastidiosa (strain 9a5c)).